We begin with the raw amino-acid sequence, 890 residues long: DNA mismatch repair protein MutS (890 aa).

Residue 645-652 (GPNMAGKS) coordinates ATP.

This sequence belongs to the DNA mismatch repair MutS family.

Its function is as follows. This protein is involved in the repair of mismatches in DNA. It is possible that it carries out the mismatch recognition step. This protein has a weak ATPase activity. The protein is DNA mismatch repair protein MutS of Rickettsia africae (strain ESF-5).